We begin with the raw amino-acid sequence, 943 residues long: Isoleucine--tRNA ligase (943 aa).

The short motif at 58-68 (PYANGKIHIGH) is the 'HIGH' region element. Glu567 is a binding site for L-isoleucyl-5'-AMP. The short motif at 608-612 (KMSKS) is the 'KMSKS' region element. Lys611 provides a ligand contact to ATP. Zn(2+) contacts are provided by Cys906, Cys909, Cys926, and Cys929.

This sequence belongs to the class-I aminoacyl-tRNA synthetase family. IleS type 1 subfamily. Monomer. Zn(2+) is required as a cofactor.

The protein localises to the cytoplasm. It carries out the reaction tRNA(Ile) + L-isoleucine + ATP = L-isoleucyl-tRNA(Ile) + AMP + diphosphate. Functionally, catalyzes the attachment of isoleucine to tRNA(Ile). As IleRS can inadvertently accommodate and process structurally similar amino acids such as valine, to avoid such errors it has two additional distinct tRNA(Ile)-dependent editing activities. One activity is designated as 'pretransfer' editing and involves the hydrolysis of activated Val-AMP. The other activity is designated 'posttransfer' editing and involves deacylation of mischarged Val-tRNA(Ile). The polypeptide is Isoleucine--tRNA ligase (Pseudomonas entomophila (strain L48)).